A 324-amino-acid chain; its full sequence is Acetyl-coenzyme A carboxylase carboxyl transferase subunit alpha (324 aa).

Residues 37 to 291 (ILEDKLENLE…NVVLQKTFEQ (255 aa)) enclose the CoA carboxyltransferase C-terminal domain.

Belongs to the AccA family. Acetyl-CoA carboxylase is a heterohexamer composed of biotin carboxyl carrier protein (AccB), biotin carboxylase (AccC) and two subunits each of ACCase subunit alpha (AccA) and ACCase subunit beta (AccD).

It is found in the cytoplasm. It carries out the reaction N(6)-carboxybiotinyl-L-lysyl-[protein] + acetyl-CoA = N(6)-biotinyl-L-lysyl-[protein] + malonyl-CoA. Its pathway is lipid metabolism; malonyl-CoA biosynthesis; malonyl-CoA from acetyl-CoA: step 1/1. Functionally, component of the acetyl coenzyme A carboxylase (ACC) complex. First, biotin carboxylase catalyzes the carboxylation of biotin on its carrier protein (BCCP) and then the CO(2) group is transferred by the carboxyltransferase to acetyl-CoA to form malonyl-CoA. This is Acetyl-coenzyme A carboxylase carboxyl transferase subunit alpha from Bacillus cytotoxicus (strain DSM 22905 / CIP 110041 / 391-98 / NVH 391-98).